The sequence spans 748 residues: Elongation factor G, mitochondrial (748 aa).

The N-terminal 14 residues, 1-14, are a transit peptide targeting the mitochondrion; the sequence is MTISSFLRVRHSLA. The tr-type G domain occupies 40–318; it reads ERIRNIGISA…VLNYLPHPGE (279 aa). Residues 49–56, 116–120, and 170–173 contribute to the GTP site; these read AHIDSGKT, DTPGH, and NKLD.

It belongs to the TRAFAC class translation factor GTPase superfamily. Classic translation factor GTPase family. EF-G/EF-2 subfamily.

The protein resides in the mitochondrion. It functions in the pathway protein biosynthesis; polypeptide chain elongation. Mitochondrial GTPase that catalyzes the GTP-dependent ribosomal translocation step during translation elongation. During this step, the ribosome changes from the pre-translocational (PRE) to the post-translocational (POST) state as the newly formed A-site-bound peptidyl-tRNA and P-site-bound deacylated tRNA move to the P and E sites, respectively. Catalyzes the coordinated movement of the two tRNA molecules, the mRNA and conformational changes in the ribosome. The sequence is that of Elongation factor G, mitochondrial from Aedes aegypti (Yellowfever mosquito).